The chain runs to 349 residues: Probable dual-specificity RNA methyltransferase RlmN (349 aa).

E94 functions as the Proton acceptor in the catalytic mechanism. Residues 100–324 (YKTHTSICLS…NKNNVNTTIR (225 aa)) form the Radical SAM core domain. The cysteines at positions 107 and 335 are disulfide-linked. [4Fe-4S] cluster-binding residues include C114, C118, and C121. S-adenosyl-L-methionine contacts are provided by residues 161–162 (GE), S193, 216–218 (SLH), and N292. C335 (S-methylcysteine intermediate) is an active-site residue.

It belongs to the radical SAM superfamily. RlmN family. Requires [4Fe-4S] cluster as cofactor.

Its subcellular location is the cytoplasm. The catalysed reaction is adenosine(2503) in 23S rRNA + 2 reduced [2Fe-2S]-[ferredoxin] + 2 S-adenosyl-L-methionine = 2-methyladenosine(2503) in 23S rRNA + 5'-deoxyadenosine + L-methionine + 2 oxidized [2Fe-2S]-[ferredoxin] + S-adenosyl-L-homocysteine. It catalyses the reaction adenosine(37) in tRNA + 2 reduced [2Fe-2S]-[ferredoxin] + 2 S-adenosyl-L-methionine = 2-methyladenosine(37) in tRNA + 5'-deoxyadenosine + L-methionine + 2 oxidized [2Fe-2S]-[ferredoxin] + S-adenosyl-L-homocysteine. Specifically methylates position 2 of adenine 2503 in 23S rRNA and position 2 of adenine 37 in tRNAs. The sequence is that of Probable dual-specificity RNA methyltransferase RlmN from Finegoldia magna (strain ATCC 29328 / DSM 20472 / WAL 2508) (Peptostreptococcus magnus).